A 435-amino-acid chain; its full sequence is Adenylosuccinate synthetase (435 aa).

Residues 22–28 and 50–52 each bind GTP; these read GDEGKGK and GHT. D23 functions as the Proton acceptor in the catalytic mechanism. Positions 23 and 50 each coordinate Mg(2+). IMP is bound by residues 23-26, 48-51, T140, R154, Q235, T250, and R314; these read DEGK and NAGH. H51 acts as the Proton donor in catalysis. Residue 310-316 coordinates substrate; that stretch reads ATTGRKR. Residues R316, 342-344, and 424-426 contribute to the GTP site; these read KLD and SVG.

Belongs to the adenylosuccinate synthetase family. As to quaternary structure, homodimer. Mg(2+) is required as a cofactor.

It localises to the cytoplasm. It carries out the reaction IMP + L-aspartate + GTP = N(6)-(1,2-dicarboxyethyl)-AMP + GDP + phosphate + 2 H(+). It participates in purine metabolism; AMP biosynthesis via de novo pathway; AMP from IMP: step 1/2. Plays an important role in the de novo pathway of purine nucleotide biosynthesis. Catalyzes the first committed step in the biosynthesis of AMP from IMP. This Chlorobaculum tepidum (strain ATCC 49652 / DSM 12025 / NBRC 103806 / TLS) (Chlorobium tepidum) protein is Adenylosuccinate synthetase.